The chain runs to 390 residues: Homeobox protein Meis1 (390 aa).

The region spanning 108-191 (GGDVCSSESF…PIDLVIDDRD (84 aa)) is the MEIS N-terminal domain. The span at 188–202 (DDRDGGSKSDSEDLT) shows a compositional bias: basic and acidic residues. The disordered stretch occupies residues 188–279 (DDRDGGSKSD…KKRNKGRGIF (92 aa)). Residues 272-334 (RNKGRGIFPK…NARRRIVQPM (63 aa)) constitute a DNA-binding region (homeobox; TALE-type). The tract at residues 299–329 (YPSEEQKKQLAQDTGLTILQVNNWFINARRR) is interaction with DNA.

It belongs to the TALE/MEIS homeobox family. As to quaternary structure, interacts with pbx1 isoform b. As to expression, in the embryo, displays a broad expression pattern with high levels observed in tissues of neural cell fate such as midbrain, hindbrain, dorsal portion of the neural tube, and neural crest-derived branchial arches. Widely expressed in the adult with highest levels in brain and spleen.

Its subcellular location is the cytoplasm. It localises to the nucleus. In terms of biological role, induces expression of a number of neural crest marker genes as part of a heterodimer with isoform b of pbx1, to specify neural crest cell fate. Binds to a highly conserved region in the promoter of the neural crest marker gene zic3. This chain is Homeobox protein Meis1 (meis1), found in Xenopus laevis (African clawed frog).